We begin with the raw amino-acid sequence, 613 residues long: DBH-like monooxygenase protein 1 (613 aa).

The N-terminal stretch at 1-19 (MCCWPLLLLWGLLPGTAAG) is a signal peptide. Residues 20–592 (GSGRTYPHRT…TSSSSSLHRD (573 aa)) lie on the Lumenal side of the membrane. Positions 35–148 (GKYWLGWSQR…STVRVIWAYH (114 aa)) constitute a DOMON domain. N-linked (GlcNAc...) asparagine glycosylation occurs at Asn114. Tyr203 is an active-site residue. 2 disulfide bridges follow: Cys205–Cys257 and Cys242–Cys269. Cu cation-binding residues include His235 and His236. Asn247 carries an N-linked (GlcNAc...) asparagine glycan. Cu cation is bound by residues His307, His389, His391, and Met464. Disulfide bonds link Cys364/Cys480, Cys368/Cys550, and Cys443/Cys465. The active site involves His389. 2 N-linked (GlcNAc...) asparagine glycosylation sites follow: Asn476 and Asn517. A helical membrane pass occupies residues 593 to 613 (FSINLLVCLLLLSCTLSTKSL).

It belongs to the copper type II ascorbate-dependent monooxygenase family. Cu(2+) serves as cofactor. Post-translationally, N-glycosylated. As to expression, highly expressed in lung, kidney, brain and spinal cord.

It localises to the endoplasmic reticulum membrane. This is DBH-like monooxygenase protein 1 (MOXD1) from Homo sapiens (Human).